The chain runs to 337 residues: tRNA-dihydrouridine synthase B (337 aa).

FMN-binding positions include 19-21 (PMA) and Gln-73. Cys-103 serves as the catalytic Proton donor. FMN contacts are provided by residues Lys-142, 203-205 (NGD), and 227-228 (GR).

This sequence belongs to the Dus family. DusB subfamily. Requires FMN as cofactor.

It carries out the reaction a 5,6-dihydrouridine in tRNA + NAD(+) = a uridine in tRNA + NADH + H(+). It catalyses the reaction a 5,6-dihydrouridine in tRNA + NADP(+) = a uridine in tRNA + NADPH + H(+). Its function is as follows. Catalyzes the synthesis of 5,6-dihydrouridine (D), a modified base found in the D-loop of most tRNAs, via the reduction of the C5-C6 double bond in target uridines. This is tRNA-dihydrouridine synthase B from Pseudomonas syringae pv. tomato (strain ATCC BAA-871 / DC3000).